The chain runs to 299 residues: ATP phosphoribosyltransferase (299 aa).

This sequence belongs to the ATP phosphoribosyltransferase family. Long subfamily. In terms of assembly, equilibrium between an active dimeric form, an inactive hexameric form and higher aggregates. Interconversion between the various forms is largely reversible and is influenced by the natural substrates and inhibitors of the enzyme. It depends on Mg(2+) as a cofactor.

It localises to the cytoplasm. The catalysed reaction is 1-(5-phospho-beta-D-ribosyl)-ATP + diphosphate = 5-phospho-alpha-D-ribose 1-diphosphate + ATP. It participates in amino-acid biosynthesis; L-histidine biosynthesis; L-histidine from 5-phospho-alpha-D-ribose 1-diphosphate: step 1/9. With respect to regulation, feedback inhibited by histidine. Catalyzes the condensation of ATP and 5-phosphoribose 1-diphosphate to form N'-(5'-phosphoribosyl)-ATP (PR-ATP). Has a crucial role in the pathway because the rate of histidine biosynthesis seems to be controlled primarily by regulation of HisG enzymatic activity. The chain is ATP phosphoribosyltransferase from Sodalis glossinidius (strain morsitans).